Here is a 72-residue protein sequence, read N- to C-terminus: Translation initiation factor IF-1 (72 aa).

In terms of domain architecture, S1-like spans 1–72; it reads MAKEDVIEIE…TRGRITYRFK (72 aa).

The protein belongs to the IF-1 family. Component of the 30S ribosomal translation pre-initiation complex which assembles on the 30S ribosome in the order IF-2 and IF-3, IF-1 and N-formylmethionyl-tRNA(fMet); mRNA recruitment can occur at any time during PIC assembly.

It localises to the cytoplasm. Functionally, one of the essential components for the initiation of protein synthesis. Stabilizes the binding of IF-2 and IF-3 on the 30S subunit to which N-formylmethionyl-tRNA(fMet) subsequently binds. Helps modulate mRNA selection, yielding the 30S pre-initiation complex (PIC). Upon addition of the 50S ribosomal subunit IF-1, IF-2 and IF-3 are released leaving the mature 70S translation initiation complex. This Streptococcus mutans serotype c (strain ATCC 700610 / UA159) protein is Translation initiation factor IF-1.